We begin with the raw amino-acid sequence, 144 residues long: Alpha-crystallin (144 aa).

A sHSP domain is found at 33–143; the sequence is PTFDTRLMRL…TEKHIQIRST (111 aa).

Belongs to the small heat shock protein (HSP20) family.

Its subcellular location is the secreted. The protein localises to the cell wall. The protein resides in the cytoplasm. Its function is as follows. Acts as a chaperone. The polypeptide is Alpha-crystallin (hspX) (Mycobacterium bovis (strain ATCC BAA-935 / AF2122/97)).